The sequence spans 324 residues: Probable UDP-sugar transporter protein SLC35A4 (324 aa).

At 1-18 (MSVEDGGVPGLGRPRKAR) the chain is on the cytoplasmic side. Residues 19–39 (WTLMLLLSTAMYGAHAPLLAL) form a helical membrane-spanning segment. Residues 40–52 (CHVDGRVPFRPSS) lie on the Lumenal side of the membrane. Residues 53–73 (AVLLTELTKLLLCALSLLVGW) traverse the membrane as a helical segment. Residues 74–85 (QAWPQGTPPWRQ) are Cytoplasmic-facing. Residues 86 to 106 (AAPFALSALLYGANNNLVIYL) traverse the membrane as a helical segment. The Lumenal segment spans residues 107-141 (QRYMDPSTYQVLSNLKIGSTALFYCLCLRHRLSAR). Residues 142–162 (QGLALLLLMAAGACYAAGGLQ) traverse the membrane as a helical segment. Topologically, residues 163–180 (DPGTTLPGPPSAAATSPM) are cytoplasmic. Residues 181–201 (PLHITPLGLLLLILYCLISGL) form a helical membrane-spanning segment. The Lumenal portion of the chain corresponds to 202–214 (SSVYTELLMKRQR). The helical transmembrane segment at 215–235 (LPLALQNLFLYSFGVLLNLGL) threads the bilayer. Residues 236 to 248 (HAGGGPGPGLLEG) lie on the Cytoplasmic side of the membrane. Residues 249 to 271 (FSGWMALVVLSQALNGLLMSAVM) traverse the membrane as a helical segment. The Lumenal segment spans residues 272–275 (KHGS). A helical transmembrane segment spans residues 276 to 298 (SITRLFVVSCSLVVNAVLSAALL). The Cytoplasmic segment spans residues 299–324 (RLQLTAAFFLATLLIGLAVRLYYGSR).

Belongs to the nucleotide-sugar transporter family. SLC35A subfamily. As to quaternary structure, found in a complex with SLC35A2 and SLC35A3.

It localises to the golgi apparatus membrane. The enzyme catalyses CDP-L-ribitol(in) + CDP(out) = CDP-L-ribitol(out) + CDP(in). Its function is as follows. Mediates the transport of CDP-ribitol. Does not exhibit CMP-sialic acid, UDP-galactose and UDP-N-acetylglucosamine transport activity. In Bos taurus (Bovine), this protein is Probable UDP-sugar transporter protein SLC35A4.